The chain runs to 360 residues: Serine/threonine-protein phosphatase 2A activator 2 (360 aa).

Belongs to the PTPA-type PPIase family.

The protein localises to the cytoplasm. It catalyses the reaction [protein]-peptidylproline (omega=180) = [protein]-peptidylproline (omega=0). In terms of biological role, PPIases accelerate the folding of proteins. It catalyzes the cis-trans isomerization of proline imidic peptide bonds in oligopeptides. Acts as a regulatory subunit for PP2A-like phosphatases modulating their activity or substrate specificity, probably by inducing a conformational change in the catalytic subunit, a direct target of the PPIase. Can reactivate inactive phosphatase PP2A-phosphatase methylesterase complexes (PP2Ai) in presence of ATP and Mg(2+) by dissociating the inactive form from the complex. The chain is Serine/threonine-protein phosphatase 2A activator 2 (RRD2) from Kluyveromyces lactis (strain ATCC 8585 / CBS 2359 / DSM 70799 / NBRC 1267 / NRRL Y-1140 / WM37) (Yeast).